Reading from the N-terminus, the 331-residue chain is Ornithine carbamoyltransferase (331 aa).

Carbamoyl phosphate-binding positions include 55-58 (STRT), Gln82, Arg106, and 133-136 (HPTQ). Residues Asn166, Asp230, and 234-235 (SM) contribute to the L-ornithine site. Residues 272-273 (CL) and Arg317 contribute to the carbamoyl phosphate site.

It belongs to the aspartate/ornithine carbamoyltransferase superfamily. OTCase family.

It is found in the cytoplasm. It carries out the reaction carbamoyl phosphate + L-ornithine = L-citrulline + phosphate + H(+). The protein operates within amino-acid biosynthesis; L-arginine biosynthesis; L-arginine from L-ornithine and carbamoyl phosphate: step 1/3. Functionally, reversibly catalyzes the transfer of the carbamoyl group from carbamoyl phosphate (CP) to the N(epsilon) atom of ornithine (ORN) to produce L-citrulline. This chain is Ornithine carbamoyltransferase (argF), found in Neisseria meningitidis serogroup B (strain ATCC BAA-335 / MC58).